The sequence spans 197 residues: Peptidyl-tRNA hydrolase (197 aa).

Tyr-17 contributes to the tRNA binding site. The active-site Proton acceptor is the His-22. The tRNA site is built by Phe-68, Asn-70, and Asn-116.

The protein belongs to the PTH family. In terms of assembly, monomer.

Its subcellular location is the cytoplasm. It catalyses the reaction an N-acyl-L-alpha-aminoacyl-tRNA + H2O = an N-acyl-L-amino acid + a tRNA + H(+). In terms of biological role, hydrolyzes ribosome-free peptidyl-tRNAs (with 1 or more amino acids incorporated), which drop off the ribosome during protein synthesis, or as a result of ribosome stalling. Catalyzes the release of premature peptidyl moieties from peptidyl-tRNA molecules trapped in stalled 50S ribosomal subunits, and thus maintains levels of free tRNAs and 50S ribosomes. The chain is Peptidyl-tRNA hydrolase from Yersinia enterocolitica serotype O:8 / biotype 1B (strain NCTC 13174 / 8081).